The primary structure comprises 188 residues: Viral FLICE protein (188 aa).

2 DED domains span residues 2-74 (ATYE…DLLH) and 93-169 (PYQL…QVQT).

In terms of assembly, interacts with host RIPK1, TRAF2, MAP3K14, IKBKB, and IKBKG. Interacts with host CADM1; this interaction is essential for chronic NF-kappa-B activation.

Plays a role in the modulation of host signaling pathways by acting as an activator of both the classic and the alternative NF-kappa-B pathways. Thereby, initiates an important range of cellular processes to promote cell survival, proliferation and protection from apoptosis. This chain is Viral FLICE protein (ORF71), found in Human herpesvirus 8 type P (isolate GK18) (HHV-8).